The sequence spans 349 residues: DNA-directed RNA polymerase subunit Rpo1N (349 aa).

The disordered stretch occupies residues 306-349 (EDEGEEFAGEQATNLSESADDRMDRDRPSSHGAAPIDVPEVGDD). Basic and acidic residues predominate over residues 324-334 (ADDRMDRDRPS).

It belongs to the RNA polymerase beta' chain family. Part of the RNA polymerase complex.

Its subcellular location is the cytoplasm. The enzyme catalyses RNA(n) + a ribonucleoside 5'-triphosphate = RNA(n+1) + diphosphate. Functionally, DNA-dependent RNA polymerase (RNAP) catalyzes the transcription of DNA into RNA using the four ribonucleoside triphosphates as substrates. Forms the clamp head domain. The polypeptide is DNA-directed RNA polymerase subunit Rpo1N (Halococcus morrhuae (Micrococcus morrhuae)).